A 264-amino-acid polypeptide reads, in one-letter code: Thiazole synthase (264 aa).

Catalysis depends on lysine 106, which acts as the Schiff-base intermediate with DXP. 1-deoxy-D-xylulose 5-phosphate-binding positions include glycine 167, 193-194 (AG), and 215-216 (NT).

Belongs to the ThiG family. As to quaternary structure, homotetramer. Forms heterodimers with either ThiH or ThiS.

The protein resides in the cytoplasm. It catalyses the reaction [ThiS sulfur-carrier protein]-C-terminal-Gly-aminoethanethioate + 2-iminoacetate + 1-deoxy-D-xylulose 5-phosphate = [ThiS sulfur-carrier protein]-C-terminal Gly-Gly + 2-[(2R,5Z)-2-carboxy-4-methylthiazol-5(2H)-ylidene]ethyl phosphate + 2 H2O + H(+). Its pathway is cofactor biosynthesis; thiamine diphosphate biosynthesis. Its function is as follows. Catalyzes the rearrangement of 1-deoxy-D-xylulose 5-phosphate (DXP) to produce the thiazole phosphate moiety of thiamine. Sulfur is provided by the thiocarboxylate moiety of the carrier protein ThiS. In vitro, sulfur can be provided by H(2)S. The sequence is that of Thiazole synthase from Stenotrophomonas maltophilia (strain K279a).